Here is a 294-residue protein sequence, read N- to C-terminus: MKDRLQELKQRTKEIELSRDSHVSTTETEEQGVFLQQAVIYEREPVAERHLHEIQKLQESINNLADNVQKFGQQQKSLVASMRRFSLLKRESTVTKEVKIQAEYINRSLNDLVKEVKKSEVENGPSSVVTRILKSQHAAMFCHFQQIMFIYNDTIAAKQEKCKTFILRQLEVAGKEMSEEDVNDMLHQGKWEVFNESLLTEINITKAQLSEIEQRHKELVNLENQIKDLRDLFIQLSLLVEEQGESINNIEMTVNSTKEYVNNTKEKFGLAVKYKKRNPCRVLCCWCCPCCSSK.

One can recognise a t-SNARE coiled-coil homology domain in the interval 209-271 (LSEIEQRHKE…NNTKEKFGLA (63 aa)).

It belongs to the syntaxin family. Interacts with EGFR.

The protein resides in the cell membrane. It is found in the cytoplasm. In terms of biological role, plays a role in endosomal trafficking of the epidermal growth factor receptor (EGFR). In Pongo abelii (Sumatran orangutan), this protein is Syntaxin-19 (STX19).